The sequence spans 121 residues: Small ribosomal subunit protein eS24 (121 aa).

The protein belongs to the eukaryotic ribosomal protein eS24 family.

This chain is Small ribosomal subunit protein eS24, found in Pyrobaculum arsenaticum (strain DSM 13514 / JCM 11321 / PZ6).